Consider the following 87-residue polypeptide: MAHKKAGGSSRNGRDSKAKRLGIKRFGGELVSAGSILVRQRGTPFHAGENVGMGKDHTLFATATGKVSFSIRGAEKRRFVSVEEIQS.

This sequence belongs to the bacterial ribosomal protein bL27 family.

In Dichelobacter nodosus (strain VCS1703A), this protein is Large ribosomal subunit protein bL27.